The chain runs to 1209 residues: Calcium-activated potassium channel subunit alpha-1 (1209 aa).

Over residues 1 to 23 (MANGGGGGGGSSGGGGGGGGGSG) the composition is skewed to gly residues. The tract at residues 1–61 (MANGGGGGGG…SSSSSSSSSV (61 aa)) is disordered. Topologically, residues 1–86 (MANGGGGGGG…VPCDSRGQRM (86 aa)) are extracellular. Positions 25-39 (RMSSNIHANNLSLDA) are enriched in polar residues. Over residues 40–60 (SSSSSSSSSSSSSSSSSSSSS) the composition is skewed to low complexity. A helical transmembrane segment spans residues 87–107 (WWAFLASSMVTFFGGLFIILL). Residues 108-178 (WRTLKYLWTV…MISAQTLTGR (71 aa)) are Cytoplasmic-facing. S-palmitoyl cysteine attachment occurs at residues C118, C119, and C121. The helical transmembrane segment at 179-199 (VLVVLVFALSIGALVIYFIDS) threads the bilayer. Over 200–214 (SNPIESCQNFYKDFT) the chain is Extracellular. A helical membrane pass occupies residues 215-235 (LQIDMAFNVFFLLYFGLRFIA). The Cytoplasmic portion of the chain corresponds to 236–239 (ANDK). Residues 240 to 260 (LWFWLEVNSVVDFFTVPPVFV) form a helical membrane-spanning segment. Topologically, residues 261–264 (SVYL) are extracellular. A helical; Voltage-sensor membrane pass occupies residues 265 to 285 (NRSWLGLRFLRALRLIQFSEI). Topologically, residues 286 to 300 (LQFLNILKTSNSIKL) are cytoplasmic. The helical transmembrane segment at 301–321 (VNLLSIFISTWLTAAGFIHLV) threads the bilayer. The Extracellular portion of the chain corresponds to 322 to 335 (ENSGDPWENFQNNQ). An intramembrane region (pore-forming) is located at residues 336 to 358 (ALTYWECVYLLMVTMSTVGYGDV). A Selectivity for potassium motif is present at residues 352–355 (TVGY). Residues 359–367 (YAKTTLGRL) are Extracellular-facing. Residues 368–388 (FMVFFILGGLAMFASYVPEII) form a helical membrane-spanning segment. Residues 389-1209 (ELIGNRKKYG…KQNRKEMVYR (821 aa)) are Cytoplasmic-facing. One can recognise an RCK N-terminal 1 domain in the interval 407 to 549 (RKHIVVCGHI…WNWKEGDDAI (143 aa)). The Mg(2+) site is built by E439, Q462, and E464. Residues 556–576 (LGFIAQSCLAQGLSTMLANLF) form a segment S7 region. The tract at residues 613–633 (LSFPTVCELCFVKLKLLMIAI) is segment S8. A Phosphothreonine modification is found at D670. K672 carries the post-translational modification Phosphoserine. The tract at residues 681–685 (CKACH) is heme-binding motif. The segment at 703–733 (EDEQPPTLSPKKKQRNGGMRNSPNTSPKLMR) is disordered. A Phosphothreonine modification is found at T709. A phosphoserine mark is found at S711, S724, and S728. Residues 783–803 (VLSGHVVVCIFGDVSSALIGL) form a segment S9 region. In terms of domain architecture, RCK N-terminal 2 spans 785–929 (SGHVVVCIFG…MDRSSPDNSP (145 aa)). T916 carries the post-translational modification Phosphothreonine. Phosphoserine is present on residues S924 and S928. Residues 976-998 (TELVNDTNVQFLDQDDDDDPDTE) carry the Calcium bowl motif. 4 residues coordinate Ca(2+): Q985, D988, D991, and D993. The segment S10 stretch occupies residues 1005-1025 (FACGTAFAVSVLDSLMSATYF). Residues 1159–1184 (RASLSHSSHSSQSSSKKSSSVHSIPS) show a composition bias toward low complexity. The disordered stretch occupies residues 1159–1209 (RASLSHSSHSSQSSSKKSSSVHSIPSTANRPNRPKSRESRDKQNRKEMVYR). Over residues 1193-1209 (KSRESRDKQNRKEMVYR) the composition is skewed to basic and acidic residues. S1194 and S1197 each carry phosphoserine.

Belongs to the potassium channel family. Calcium-activated (TC 1.A.1.3) subfamily. KCa1.1/KCNMA1 sub-subfamily. In terms of assembly, homotetramer; which constitutes the calcium-activated potassium channel. Interacts with beta subunits KCNMB1, KCNMB2, KCNMB3 and KCNMB4. Interacts with gamma subunits LRRC26, LRRC38, LRRC52 and LRRC55. Beta and gamma subunits are accessory, and modulate its activity. Interacts with RAB11B. In terms of processing, phosphorylated. Phosphorylation by kinases such as PKA and/or PKG. In smooth muscles, phosphorylation affects its activity. Palmitoylation by ZDHHC22 and ZDHHC23 within the intracellular linker between the S0 and S1 transmembrane domains regulates localization to the plasma membrane. Depalmitoylated by LYPLA1 and LYPLAL1, leading to retard exit from the trans-Golgi network.

It localises to the cell membrane. It carries out the reaction K(+)(in) = K(+)(out). With respect to regulation, ethanol and carbon monoxide-bound heme increase channel activation. Heme inhibits channel activation. Potassium channel activated by both membrane depolarization or increase in cytosolic Ca(2+) that mediates export of K(+). It is also activated by the concentration of cytosolic Mg(2+). Its activation dampens the excitatory events that elevate the cytosolic Ca(2+) concentration and/or depolarize the cell membrane. It therefore contributes to repolarization of the membrane potential. Plays a key role in controlling excitability in a number of systems, such as regulation of the contraction of smooth muscle, the tuning of hair cells in the cochlea, regulation of transmitter release, and innate immunity. In smooth muscles, its activation by high level of Ca(2+), caused by ryanodine receptors in the sarcoplasmic reticulum, regulates the membrane potential. In cochlea cells, its number and kinetic properties partly determine the characteristic frequency of each hair cell and thereby helps to establish a tonotopic map. Kinetics of KCNMA1 channels are determined by alternative splicing, phosphorylation status and its combination with modulating beta subunits. Highly sensitive to both iberiotoxin (IbTx) and charybdotoxin (CTX). Its function is as follows. Potassium channel activated by both membrane depolarization or increase in cytosolic Ca(2+) that mediates export of K(+). In Mus musculus (Mouse), this protein is Calcium-activated potassium channel subunit alpha-1 (Kcnma1).